The following is a 355-amino-acid chain: Alpha-N-acetylneuraminide alpha-2,8-sialyltransferase (355 aa).

The Cytoplasmic portion of the chain corresponds to 1 to 28; that stretch reads MSPCGRALHTSRGAMAMLARKFPRTRLP. A helical; Signal-anchor for type II membrane protein transmembrane segment spans residues 29-47; that stretch reads VGASALCVVVLCWLYIFPV. Residues 48-355 are Lumenal-facing; sequence YRLPNEKEIV…CEEPSPQPTS (308 aa). N-linked (GlcNAc...) asparagine glycans are attached at residues Asn-70 and Asn-118. 2 cysteine pairs are disulfide-bonded: Cys-137-Cys-286 and Cys-151-Cys-346. CMP-N-acetyl-beta-neuraminate-binding residues include Asn-142 and Asn-165. N-linked (GlcNAc...) asparagine glycosylation is found at Asn-213 and Asn-244. 5 residues coordinate CMP-N-acetyl-beta-neuraminate: Ser-273, Thr-274, Gly-275, Trp-295, and His-309. Catalysis depends on His-321, which acts as the Proton donor/acceptor.

The protein belongs to the glycosyltransferase 29 family.

The protein localises to the golgi apparatus membrane. The enzyme catalyses an N-acetyl-alpha-neuraminyl-(2-&gt;3)-beta-D-galactosyl derivative + CMP-N-acetyl-beta-neuraminate = an N-acetyl-alpha-neuraminyl-(2-&gt;8)-N-acetyl-alpha-neuraminyl-(2-&gt;3)-beta-D-galactosyl derivative + CMP + H(+). The catalysed reaction is a ganglioside GM3 (d18:1(4E)) + CMP-N-acetyl-beta-neuraminate = a ganglioside GD3 (d18:1(4E)) + CMP + H(+). It catalyses the reaction a ganglioside GD3 (d18:1(4E)) + CMP-N-acetyl-beta-neuraminate = a ganglioside GT3 (d18:1(4E)) + CMP + H(+). It carries out the reaction a ganglioside GD1a (d18:1(4E)) + CMP-N-acetyl-beta-neuraminate = a ganglioside GT1a (d18:1(4E)) + CMP + H(+). The enzyme catalyses a ganglioside GT1b (d18:1(4E)) + CMP-N-acetyl-beta-neuraminate = a ganglioside GQ1b (d18:1(4E)) + CMP + H(+). The catalysed reaction is a ganglioside GM1b (d18:1(4E)) + CMP-N-acetyl-beta-neuraminate = a ganglioside GD1c (d18:1(4E)) + CMP + H(+). It catalyses the reaction a ganglioside GD3 + CMP-N-acetyl-beta-neuraminate = a ganglioside GT3 + CMP + H(+). It carries out the reaction [alpha-N-acetylneuraminyl-(2-&gt;8)](n)-alpha-N-acetylneuraminyl-(2-&gt;8)-alpha-N-acetylneuraminyl-(2-&gt;3)-beta-D-galactosyl-(1-&gt;4)-beta-D-glucosyl-(1&lt;-&gt;1)-ceramide + CMP-N-acetyl-beta-neuraminate = [alpha-N-acetylneuraminyl-(2-&gt;8)](n+1)-alpha-N-acetylneuraminyl-(2-&gt;8)-alpha-N-acetylneuraminyl-(2-&gt;3)-beta-D-galactosyl-(1-&gt;4)-beta-D-glucosyl-(1&lt;-&gt;1)-ceramide + CMP + H(+). Its pathway is protein modification; protein glycosylation. It participates in lipid metabolism; sphingolipid metabolism. Its function is as follows. Catalyzes the addition of sialic acid in alpha 2,8-linkage to the sialic acid moiety of the ganglioside GM3 to form ganglioside GD3; gangliosides are a subfamily of complex glycosphingolipds that contain one or more residues of sialic acid. Can catalyze the addition of a second alpha-2,8- sialic acid to GD3 to form GT3. Can use GM1b, GD1a and GT1b as acceptor substrates to synthesize GD1c, GT1a and GQ1b respectively. This Mus musculus (Mouse) protein is Alpha-N-acetylneuraminide alpha-2,8-sialyltransferase.